Here is a 297-residue protein sequence, read N- to C-terminus: Indole-3-glycerol phosphate synthase (297 aa).

Belongs to the TrpC family.

It catalyses the reaction 1-(2-carboxyphenylamino)-1-deoxy-D-ribulose 5-phosphate + H(+) = (1S,2R)-1-C-(indol-3-yl)glycerol 3-phosphate + CO2 + H2O. The protein operates within amino-acid biosynthesis; L-tryptophan biosynthesis; L-tryptophan from chorismate: step 4/5. This chain is Indole-3-glycerol phosphate synthase, found in Trichodesmium erythraeum (strain IMS101).